The sequence spans 483 residues: Glutamyl-tRNA(Gln) amidotransferase subunit A (483 aa).

Active-site charge relay system residues include Lys76 and Ser151. Catalysis depends on Ser175, which acts as the Acyl-ester intermediate.

Belongs to the amidase family. GatA subfamily. As to quaternary structure, heterotrimer of A, B and C subunits.

The catalysed reaction is L-glutamyl-tRNA(Gln) + L-glutamine + ATP + H2O = L-glutaminyl-tRNA(Gln) + L-glutamate + ADP + phosphate + H(+). Its function is as follows. Allows the formation of correctly charged Gln-tRNA(Gln) through the transamidation of misacylated Glu-tRNA(Gln) in organisms which lack glutaminyl-tRNA synthetase. The reaction takes place in the presence of glutamine and ATP through an activated gamma-phospho-Glu-tRNA(Gln). The sequence is that of Glutamyl-tRNA(Gln) amidotransferase subunit A from Pseudomonas putida (strain ATCC 47054 / DSM 6125 / CFBP 8728 / NCIMB 11950 / KT2440).